Here is a 283-residue protein sequence, read N- to C-terminus: Formamidopyrimidine-DNA glycosylase (283 aa).

The active-site Schiff-base intermediate with DNA is Pro2. Glu3 functions as the Proton donor in the catalytic mechanism. The active-site Proton donor; for beta-elimination activity is Lys58. DNA-binding residues include His100, Arg119, and Arg162. The FPG-type zinc-finger motif lies at 247 to 283 (RVYGREGLPCVTPGCSGTVGRIVQSGRSSFHCPLCQR). The active-site Proton donor; for delta-elimination activity is the Arg273.

This sequence belongs to the FPG family. Monomer. Requires Zn(2+) as cofactor.

It catalyses the reaction Hydrolysis of DNA containing ring-opened 7-methylguanine residues, releasing 2,6-diamino-4-hydroxy-5-(N-methyl)formamidopyrimidine.. The catalysed reaction is 2'-deoxyribonucleotide-(2'-deoxyribose 5'-phosphate)-2'-deoxyribonucleotide-DNA = a 3'-end 2'-deoxyribonucleotide-(2,3-dehydro-2,3-deoxyribose 5'-phosphate)-DNA + a 5'-end 5'-phospho-2'-deoxyribonucleoside-DNA + H(+). Its function is as follows. Involved in base excision repair of DNA damaged by oxidation or by mutagenic agents. Acts as a DNA glycosylase that recognizes and removes damaged bases. Has a preference for oxidized purines, such as 7,8-dihydro-8-oxoguanine (8-oxoG). Has AP (apurinic/apyrimidinic) lyase activity and introduces nicks in the DNA strand. Cleaves the DNA backbone by beta-delta elimination to generate a single-strand break at the site of the removed base with both 3'- and 5'-phosphates. This Cereibacter sphaeroides (strain KD131 / KCTC 12085) (Rhodobacter sphaeroides) protein is Formamidopyrimidine-DNA glycosylase.